A 237-amino-acid chain; its full sequence is Phosphoglycolate phosphatase (237 aa).

Asp-15 (nucleophile) is an active-site residue. Positions 15, 17, and 177 each coordinate Mg(2+).

Belongs to the HAD-like hydrolase superfamily. CbbY/CbbZ/Gph/YieH family. Mg(2+) is required as a cofactor.

The enzyme catalyses 2-phosphoglycolate + H2O = glycolate + phosphate. It functions in the pathway organic acid metabolism; glycolate biosynthesis; glycolate from 2-phosphoglycolate: step 1/1. Functionally, specifically catalyzes the dephosphorylation of 2-phosphoglycolate. Is involved in the dissimilation of the intracellular 2-phosphoglycolate formed during the DNA repair of 3'-phosphoglycolate ends, a major class of DNA lesions induced by oxidative stress. The chain is Phosphoglycolate phosphatase from Caulobacter vibrioides (strain ATCC 19089 / CIP 103742 / CB 15) (Caulobacter crescentus).